Reading from the N-terminus, the 120-residue chain is V-type proton ATPase subunit F (120 aa).

It belongs to the V-ATPase F subunit family. As to quaternary structure, V-ATPase is a heteromultimeric enzyme composed of a peripheral catalytic V1 complex (components A to H) attached to an integral membrane V0 proton pore complex (components: a, c, c', c'' and d).

Functionally, subunit of the peripheral V1 complex of vacuolar ATPase essential for assembly or catalytic function. V-ATPase is responsible for acidifying a variety of intracellular compartments in eukaryotic cells. The protein is V-type proton ATPase subunit F (vatF) of Dictyostelium discoideum (Social amoeba).